A 504-amino-acid chain; its full sequence is Maturase K (504 aa).

The protein belongs to the intron maturase 2 family. MatK subfamily.

It localises to the plastid. Its subcellular location is the chloroplast. Functionally, usually encoded in the trnK tRNA gene intron. Probably assists in splicing its own and other chloroplast group II introns. This Capsella bursa-pastoris (Shepherd's purse) protein is Maturase K.